The primary structure comprises 417 residues: Gamma-glutamyl phosphate reductase (417 aa).

This sequence belongs to the gamma-glutamyl phosphate reductase family.

The protein resides in the cytoplasm. It catalyses the reaction L-glutamate 5-semialdehyde + phosphate + NADP(+) = L-glutamyl 5-phosphate + NADPH + H(+). The protein operates within amino-acid biosynthesis; L-proline biosynthesis; L-glutamate 5-semialdehyde from L-glutamate: step 2/2. In terms of biological role, catalyzes the NADPH-dependent reduction of L-glutamate 5-phosphate into L-glutamate 5-semialdehyde and phosphate. The product spontaneously undergoes cyclization to form 1-pyrroline-5-carboxylate. This chain is Gamma-glutamyl phosphate reductase, found in Escherichia fergusonii (strain ATCC 35469 / DSM 13698 / CCUG 18766 / IAM 14443 / JCM 21226 / LMG 7866 / NBRC 102419 / NCTC 12128 / CDC 0568-73).